Reading from the N-terminus, the 280-residue chain is Eukaryotic translation initiation factor 3 subunit F-1 (280 aa).

The MPN domain occupies 8 to 138 (VRVHPVVLFQ…LRAYVCIQLG (131 aa)).

This sequence belongs to the eIF-3 subunit F family. As to quaternary structure, component of the eukaryotic translation initiation factor 3 (eIF-3) complex. The eIF-3 complex interacts with pix.

It localises to the cytoplasm. Component of the eukaryotic translation initiation factor 3 (eIF-3) complex, which is involved in protein synthesis of a specialized repertoire of mRNAs and, together with other initiation factors, stimulates binding of mRNA and methionyl-tRNAi to the 40S ribosome. The eIF-3 complex specifically targets and initiates translation of a subset of mRNAs involved in cell proliferation. In Drosophila erecta (Fruit fly), this protein is Eukaryotic translation initiation factor 3 subunit F-1.